A 911-amino-acid polypeptide reads, in one-letter code: MIGKLFRAVFGSKNDRELKRMGKLVRKINALEPEFEPLDDTQLKAKTAEFRERFNNGESLDQLLPEAFAAAREASKRAMGMRHFDVQLIGGITLHEGRIAEMKTGEGKTLVATLAAYLNGIPGKGVHIVTVNDYLARRDANWMRPVYEALGMTVGSIVSMQDPAEKREAYAADITYGTNNEYGFDYLRDNMALRKEDRMQRPLAYAVVDEVDSILIDEARTPLIISGAAEDSSVLYQAINKLIPSLKRQPEAPEGEEPTELGHFTIDEKMRSIELTEDGHQLVEELLIKNGLLGENDSLYHASNLSLLHHILSGLRAHHLYHKNVEYIVQNGQVVLIDEHTGRTMPGRRLSEGLHQAIEAKEGVAIQAESQTMASTTFQNYFRIYDKLAGMTGTADTEAFEFRQIYGLDVVVIPTNRPVARKDLNDLIFLSVEDKYDAIIEDVNEFRGKNAPVLVGTASVETSEEMSKRLTEAGIAHEVLNAKQHEREADIIAQAGRPGAVTIATNMAGRGTDIVLGGKWQAEIDKLENPTEEQIAAIKEDWKKRHEIVLEAGGLHIIGTERHESRRIDNQLRGRAGRQGDPGLSRFYLSLEDNLMRIFASDRMRAIMQTLGMEKGEAIEHRMVTNAIEKAQRKVEGRNFDYRKQLLEYDDVANDQRRVVYAQRNELLEADDIEEAIHGIREDVIAAQLESFVPPQSVEEQWDIKGLEQTLLNDYGVSVPLQQWLDEDSKMDEEGLRTKLTEVMDEIYARKCEAIGSAMRTLEKQLMLQVLDTLWKEHLQNMDALRQGINLRAYAQRNPKQEYKRESFTLFEEMLQNLKFDLTRVLFRVQPISEEQLAEMERRRQAEAAARKIQLQHEQVSGLEPEAGEAPSAGEPRSEQPYVRAGRKVGRNDPCPCGSGKKFKACHGKLG.

Residues glutamine 87, 105–109 (GEGKT), and aspartate 513 contribute to the ATP site. The tract at residues 853–911 (IQLQHEQVSGLEPEAGEAPSAGEPRSEQPYVRAGRKVGRNDPCPCGSGKKFKACHGKLG) is disordered. A compositionally biased stretch (low complexity) spans 862 to 875 (GLEPEAGEAPSAGE). Residues cysteine 895, cysteine 897, cysteine 906, and histidine 907 each contribute to the Zn(2+) site. Positions 901–911 (KKFKACHGKLG) are enriched in basic residues.

Belongs to the SecA family. In terms of assembly, monomer and homodimer. Part of the essential Sec protein translocation apparatus which comprises SecA, SecYEG and auxiliary proteins SecDF-YajC and YidC. Zn(2+) serves as cofactor.

The protein resides in the cell inner membrane. Its subcellular location is the cytoplasm. The enzyme catalyses ATP + H2O + cellular proteinSide 1 = ADP + phosphate + cellular proteinSide 2.. Part of the Sec protein translocase complex. Interacts with the SecYEG preprotein conducting channel. Has a central role in coupling the hydrolysis of ATP to the transfer of proteins into and across the cell membrane, serving both as a receptor for the preprotein-SecB complex and as an ATP-driven molecular motor driving the stepwise translocation of polypeptide chains across the membrane. This is Protein translocase subunit SecA from Teredinibacter turnerae (strain ATCC 39867 / T7901).